Consider the following 518-residue polypeptide: Xylose import ATP-binding protein XylG (518 aa).

2 consecutive ABC transporter domains span residues 6-245 (LQMN…VGRE) and 262-507 (FEAR…LSHP). 38-45 (GENGTGKS) serves as a coordination point for ATP.

Belongs to the ABC transporter superfamily. Xylose importer (TC 3.A.1.2.4) family. As to quaternary structure, the complex is composed of two ATP-binding proteins (XylG), two transmembrane proteins (XylH) and a solute-binding protein (XylF).

It is found in the cell inner membrane. The catalysed reaction is D-xylose(out) + ATP + H2O = D-xylose(in) + ADP + phosphate + H(+). Part of the ABC transporter complex XylFGH involved in xylose import. Responsible for energy coupling to the transport system. The polypeptide is Xylose import ATP-binding protein XylG (Pseudomonas savastanoi pv. phaseolicola (strain 1448A / Race 6) (Pseudomonas syringae pv. phaseolicola (strain 1448A / Race 6))).